Consider the following 339-residue polypeptide: Methyltransferase ptaI (339 aa).

This sequence belongs to the methyltransferase superfamily.

The protein operates within secondary metabolite biosynthesis. Methyltransferase; part of the gene cluster that mediates the biosynthesis of pestheic acid, a diphenyl ether which is a biosynthetic precursor of the unique chloropupukeananes. The biosynthesis initiates from condensation of acetate and malonate units catalyzed by the non-reducing PKS ptaA. As the ptaA protein is TE/CLC domain-deficient, hydrolysis and Claisen cyclization of the polyketide could be catalyzed by ptaB containing a beta-lactamase domain. The ptaB protein might hydrolyze the thioester bond between the ACP of ptaA and the intermediate to release atrochrysone carboxylic acid, which is spontaneously dehydrated to form endocrocin anthrone. Endocrocin anthrone is then converted to endocrocin, catalyzed by the anthrone oxygenase ptaC. Spontaneous decarboxylation of endocrocin occurs to generate emodin. An O-methyltransferase (ptaH or ptaI) could methylate emodin to form physcion. PtaJ could then catalyze the oxidative cleavage of physcion, and rotation of the intermediate could then afford desmethylisosulochrin. PtaF, a putative NADH-dependent oxidoreductase, might also participate in the oxidative cleavage step. Desmethylisosulochrin is then transformed by another O-methyltransferase (ptaH or ptaI) to form isosulochrin. Chlorination of isosulochrin by ptaM in the cyclohexadienone B ring then produces chloroisosulochrin. PtaE is responsible for the oxidative coupling reactions of both benzophenones isosulouchrin and chloroisosulochrin to RES-1214-1 and pestheic acid respectively, regardless of chlorination. The sequence is that of Methyltransferase ptaI from Pestalotiopsis fici (strain W106-1 / CGMCC3.15140).